The following is a 623-amino-acid chain: Kelch-like protein diablo (623 aa).

The tract at residues 1–54 is disordered; sequence MGDLPGSGSTAQPRDAAVTGTGGNSTAGGGSSVGSTAVDRPPSPARLSHTSEKH. Thr-19 is modified (phosphothreonine). Residues 20–32 are compositionally biased toward gly residues; the sequence is GTGGNSTAGGGSS. The 68-residue stretch at 72–139 folds into the BTB domain; that stretch reads CDVVLNVGGR…CYTAHIIVEE (68 aa). One can recognise a BACK domain in the interval 174–276; it reads CLGIRAFADT…SPKFLVGTVG (103 aa). Kelch repeat units follow at residues 323–369, 371–417, 418–464, 466–511, 513–558, and 559–605; these read VLFA…VLND, LYAV…VLDE, FLYA…VLGG, LYAI…VFNN, IYAV…VVNG, and QLYA…VMRA.

The protein operates within protein modification; protein ubiquitination. Probable substrate-specific adapter of an E3 ubiquitin-protein ligase complex which mediates the ubiquitination and subsequent proteasomal degradation of target proteins. May have a role in synapse differentiation and growth. The chain is Kelch-like protein diablo from Drosophila simulans (Fruit fly).